Here is a 226-residue protein sequence, read N- to C-terminus: ATP synthase subunit a (226 aa).

The next 7 membrane-spanning stretches (helical) occupy residues 18-38 (FIIGFHTLLVAVILLILARYA), 44-64 (VVPSGIQNVFEFIISGIISFA), 79-99 (LAATIAFLVFFGNAIGIIPGF), 105-125 (SWSFTLVLALVVFFYYHFEGI), 137-157 (FMGPVWWLAPLMFPVEIISHF), 177-197 (FLLVMLMLAPWIVPVAPFAIL), and 202-222 (LLQAFVFMILTYVYIHGAVVV).

It belongs to the ATPase A chain family. F-type ATPases have 2 components, CF(1) - the catalytic core - and CF(0) - the membrane proton channel. CF(1) has five subunits: alpha(3), beta(3), gamma(1), delta(1), epsilon(1). CF(0) has three main subunits: a(1), b(2) and c(9-12). The alpha and beta chains form an alternating ring which encloses part of the gamma chain. CF(1) is attached to CF(0) by a central stalk formed by the gamma and epsilon chains, while a peripheral stalk is formed by the delta and b chains.

The protein localises to the cell inner membrane. Key component of the proton channel; it plays a direct role in the translocation of protons across the membrane. The chain is ATP synthase subunit a from Helicobacter hepaticus (strain ATCC 51449 / 3B1).